Reading from the N-terminus, the 345-residue chain is uncharacterized protein (345 aa).

PDZ GRASP-type domains are found at residues 27–112 (CGFR…WASI) and 118–207 (AIWH…HGVL). The segment at 27 to 223 (CGFRVLKVEN…LSGPPPQPGD (197 aa)) is GRASP. The interval 229–345 (PMLGGPDHKV…APQNEELVKN (117 aa)) is disordered. A compositionally biased stretch (basic and acidic residues) spans 297-308 (KLSRELDHKTKD). Composition is skewed to polar residues over residues 309–318 (ASSTNDSQTT) and 328–338 (VNSTNDESAPQ).

It localises to the golgi apparatus membrane. This is an uncharacterized protein from Schizosaccharomyces pombe (strain 972 / ATCC 24843) (Fission yeast).